Reading from the N-terminus, the 473-residue chain is H(+)/Cl(-) exchange transporter ClcA (473 aa).

Residues 1–32 (MKTDTPTFEAQQIVRLRRGRLIRRLVQRDKTP) are Cytoplasmic-facing. The helical transmembrane segment at 33–69 (LAILLMAAVVGTLTGLVGVAFEKAVSWVQNMRIGALV) threads the bilayer. Over 70 to 76 (QVADHAF) the chain is Periplasmic. Residues 77–100 (LLWPLAFILSALLAMVGYFLVRKF) form a helical membrane-spanning segment. The short motif at 106-110 (GSGIP) is the Selectivity filter part_1 element. A chloride-binding site is contributed by Ser-107. Positions 109-116 (IPEIEGAL) form an intramembrane region, helical. The Cytoplasmic portion of the chain corresponds to 117-123 (EELRPVR). The next 2 helical transmembrane spans lie at 124–141 (WWRV…TLGA) and 148–166 (EGPT…LDVF). The Selectivity filter part_2 signature appears at 146 to 150 (GREGP). Residues 167-176 (RMRSAEARHT) lie on the Cytoplasmic side of the membrane. Intramembrane regions (helical) lie at residues 177–189 (LLAT…LSAA) and 193–201 (PLAGILFII). Residues 202-214 (EEMRPQFRYNLIS) lie on the Cytoplasmic side of the membrane. Residues 215–232 (IKAVFTGVIMSSIVFRIF) traverse the membrane as a helical segment. The Periplasmic portion of the chain corresponds to 233 to 252 (NGEAPIIEVGKLSNAPVNTL). The chain crosses the membrane as a helical span at residues 253–281 (WLYLVLGIIFGCVGPVFNTLVLRTQDMFQ). The Cytoplasmic segment spans residues 282 to 287 (RFHGGE). The helical transmembrane segment at 288-309 (IKKWVLMGGAIGGLCGILGLIE) threads the bilayer. Residues 310–329 (PEAAGGGFNLIPIAAAGNFS) are Periplasmic-facing. Helical transmembrane passes span 330 to 349 (VGLL…LCFS) and 355 to 376 (GIFA…MAAA). The short motif at 355–359 (GIFAP) is the Selectivity filter part_3 element. The chloride site is built by Ile-356 and Phe-357. Residues 377–386 (VLFPQYHLEA) lie on the Periplasmic side of the membrane. Residues 387-401 (GTFAIAGMGALMAAS) constitute an intramembrane region (helical). Positions 402–404 (VRA) form an intramembrane region, note=Loop between two helices. The helical intramembrane region spans 405-416 (PLTGIVLVLEMT). The note=Loop between two helices intramembrane region spans 417–421 (DNYQL). Residues 422 to 438 (ILPMIITCLGATLLAQF) traverse the membrane as a helical segment. The Cytoplasmic segment spans residues 439-473 (LGGKPLYSTILARTLAKQDAEQAAKNQSTPAGENT). Tyr-445 provides a ligand contact to chloride.

The protein belongs to the chloride channel (TC 2.A.49) family. ClcA subfamily. Homodimer.

It is found in the cell inner membrane. It catalyses the reaction 2 chloride(in) + H(+)(out) = 2 chloride(out) + H(+)(in). Its function is as follows. Proton-coupled chloride transporter. Functions as antiport system and exchanges two chloride ions for 1 proton. Probably acts as an electrical shunt for an outwardly-directed proton pump that is linked to amino acid decarboxylation, as part of the extreme acid resistance (XAR) response. The protein is H(+)/Cl(-) exchange transporter ClcA of Salmonella arizonae (strain ATCC BAA-731 / CDC346-86 / RSK2980).